The primary structure comprises 152 residues: Ribosome maturation factor RimP (152 aa).

This sequence belongs to the RimP family.

The protein resides in the cytoplasm. In terms of biological role, required for maturation of 30S ribosomal subunits. The protein is Ribosome maturation factor RimP of Proteus mirabilis (strain HI4320).